A 594-amino-acid chain; its full sequence is Frizzled and smoothened-like protein A (594 aa).

Residues 1–22 form the signal peptide; sequence MVDIRKSLFFIIFFIFYNYVNS. At 23–248 the chain is on the extracellular side; that stretch reads QKAINSDAFC…NEWYQFKDLT (226 aa). The FZ domain occupies 27–173; the sequence is NSDAFCQKKT…SNYDLQCLNI (147 aa). 2 cysteine pairs are disulfide-bonded: C32/C98 and C41/C91. 2 N-linked (GlcNAc...) asparagine glycosylation sites follow: N55 and N106. Cysteines 117 and 170 form a disulfide. N-linked (GlcNAc...) asparagine glycans are attached at residues N182, N189, N195, and N206. Residues 249 to 269 traverse the membrane as a helical segment; the sequence is TVTGVISFVCIFFNIFIYGFL. Residues 270 to 277 lie on the Cytoplasmic side of the membrane; the sequence is NKKHDRHT. A helical transmembrane segment spans residues 278 to 298; it reads IGILCLSFSLWCCMLSDLIVA. The Extracellular segment spans residues 299–329; that stretch reads SSPDYSLVCPEPGRFARIHDSRCVANGIIFQ. A helical transmembrane segment spans residues 330–350; that stretch reads WGAVCTTMFWSAMAIDLYLVI. Topologically, residues 351 to 361 are cytoplasmic; that stretch reads KKLSLPAFTVK. The helical transmembrane segment at 362-382 threads the bilayer; it reads YFVAAIFTLALLFTTVPLAWD. The Extracellular portion of the chain corresponds to 383 to 403; it reads DYGYGFGGVGCWIMSNSVQNG. Residues 404–424 traverse the membrane as a helical segment; it reads CFWIPMLICLLIGAVSICLII. The Cytoplasmic segment spans residues 425-448; sequence YEIVKVFKNVGRSGISIILANARL. The chain crosses the membrane as a helical span at residues 449 to 469; it reads FGIVSFIFIEYIYLFVYHFWV. Topologically, residues 470-507 are extracellular; it reads QENTEKFTQNITDWVICVQTTGSSDGCPLPKAVPYATQ. The N-linked (GlcNAc...) asparagine glycan is linked to N479. Residues 508–528 form a helical membrane-spanning segment; that stretch reads FIFLFFLRLLGIEVCIFYGIN. The Cytoplasmic segment spans residues 529–594; the sequence is SRSKNIILES…SKNGGDDDDL (66 aa).

This sequence belongs to the G-protein coupled receptor Fz/Smo family.

It localises to the membrane. This chain is Frizzled and smoothened-like protein A (fslA), found in Dictyostelium discoideum (Social amoeba).